A 115-amino-acid chain; its full sequence is Peptidyl-tRNA hydrolase (115 aa).

This sequence belongs to the PTH2 family.

It localises to the cytoplasm. It carries out the reaction an N-acyl-L-alpha-aminoacyl-tRNA + H2O = an N-acyl-L-amino acid + a tRNA + H(+). The natural substrate for this enzyme may be peptidyl-tRNAs which drop off the ribosome during protein synthesis. This chain is Peptidyl-tRNA hydrolase, found in Methanococcoides burtonii (strain DSM 6242 / NBRC 107633 / OCM 468 / ACE-M).